The primary structure comprises 291 residues: Protease HtpX homolog (291 aa).

Transmembrane regions (helical) follow at residues 4-24 and 38-58; these read VVLF…SARV and MGML…ISLL. Position 144 (His144) interacts with Zn(2+). The active site involves Glu145. His148 contributes to the Zn(2+) binding site. 2 helical membrane-spanning segments follow: residues 159–179 and 199–219; these read LIQG…AYAI and ISSI…VMYF. A Zn(2+)-binding site is contributed by Glu224.

This sequence belongs to the peptidase M48B family. Zn(2+) serves as cofactor.

The protein localises to the cell inner membrane. The chain is Protease HtpX homolog from Chlorobium phaeobacteroides (strain DSM 266 / SMG 266 / 2430).